We begin with the raw amino-acid sequence, 705 residues long: DNA polymerase alpha subunit B (705 aa).

Residues 115 to 199 are disordered; it reads KKRKLHGPFS…TPTTSRQNVP (85 aa). The segment covering 125 to 134 has biased composition (polar residues); the sequence is LSDSKQTYNV. The residue at position 126 (S126) is a Phosphoserine. Low complexity predominate over residues 181–197; that stretch reads STFQTPTTNTPTTSRQN.

It belongs to the DNA polymerase alpha subunit B family. As to quaternary structure, DNA polymerase alpha:primase is a four subunit enzyme complex, which is assembled throughout the cell cycle, and consists of the two DNA polymerase subunits A POL1 and B POL12, and the DNA primase large PRI2 and small PRI1 subunits. Subunit B POL12 binds to subunit A POL1. Post-translationally, phosphorylated in a cell cycle-dependent manner.

It localises to the nucleus. Functionally, non-catalytic component of DNA polymerase alpha, which in a complex with DNA primase (DNA polymerase alpha:primase) constitutes a replicative polymerase. POL12 may play an essential role at the early stage of chromosomal DNA replication by coupling DNA polymerase alpha to the cellular replication machinery. Interacts with MCM10. In Saccharomyces cerevisiae (strain ATCC 204508 / S288c) (Baker's yeast), this protein is DNA polymerase alpha subunit B (POL12).